A 378-amino-acid polypeptide reads, in one-letter code: Zinc finger protein DPF3 (378 aa).

K99 participates in a covalent cross-link: Glycyl lysine isopeptide (Lys-Gly) (interchain with G-Cter in SUMO2). The segment at 145–193 is disordered; sequence VLENDENVEEGNEEEDLEEDIPKRKNRTRGRARGSAGGRRRHDAASQED. Residues 148 to 163 show a composition bias toward acidic residues; sequence NDENVEEGNEEEDLEE. A compositionally biased stretch (basic residues) spans 168-186; that stretch reads RKNRTRGRARGSAGGRRRH. The segment at 198–221 adopts a C2H2-type zinc-finger fold; sequence YVCDICGKRYKNRPGLSYHYAHTH. Residues 225–254 form a disordered region; that stretch reads EEGDEAQDQETRSPPNHRNENHRPQKGPDG. 2 PHD-type zinc fingers span residues 259–319 and 316–366; these read NNYC…CKSC and CKSC…CWEL. Residues 317-332 form an interaction with HDGFL2 region; sequence KSCILCGTSENDDQLL. Residue G323 is modified to Phosphoserine.

This sequence belongs to the requiem/DPF family. In terms of assembly, component of the BAF complex, which includes at least actin (ACTB), ARID1A, ARID1B/BAF250, SMARCA2, SMARCA4/BRG1/BAF190A, ACTL6A/BAF53, ACTL6B/BAF53B, SMARCE1/BAF57, SMARCC1/BAF155, SMARCC2/BAF170, SMARCB1/SNF5/INI1, and one or more of SMARCD1/BAF60A, SMARCD2/BAF60B, or SMARCD3/BAF60C. In muscle cells, the BAF complex also contains DPF3. Interacts with acetylated histones H3 and H4. Component of neuron-specific chromatin remodeling complex (nBAF complex) composed of at least, ARID1A/BAF250A or ARID1B/BAF250B, SMARCD1/BAF60A, SMARCD3/BAF60C, SMARCA2/BRM/BAF190B, SMARCA4/BRG1/BAF190A, SMARCB1/BAF47, SMARCC1/BAF155, SMARCE1/BAF57, SMARCC2/BAF170, DPF1/BAF45B, DPF3/BAF45C, ACTL6B/BAF53B and actin. As to quaternary structure, interacts with HDGFL2, SMARCA4/BRG1/BAF190A, SMARCC1/BAF155 and SMARCD1/BAF60A. Phosphorylation at Ser-323 enhances its interaction with HDGFL2.

It is found in the nucleus. In terms of biological role, belongs to the neuron-specific chromatin remodeling complex (nBAF complex). During neural development a switch from a stem/progenitor to a post-mitotic chromatin remodeling mechanism occurs as neurons exit the cell cycle and become committed to their adult state. The transition from proliferating neural stem/progenitor cells to post-mitotic neurons requires a switch in subunit composition of the npBAF and nBAF complexes. As neural progenitors exit mitosis and differentiate into neurons, npBAF complexes which contain ACTL6A/BAF53A and PHF10/BAF45A, are exchanged for homologous alternative ACTL6B/BAF53B and DPF1/BAF45B or DPF3/BAF45C subunits in neuron-specific complexes (nBAF). The npBAF complex is essential for the self-renewal/proliferative capacity of the multipotent neural stem cells. The nBAF complex along with CREST plays a role regulating the activity of genes essential for dendrite growth. Muscle-specific component of the BAF complex, a multiprotein complex involved in transcriptional activation and repression of select genes by chromatin remodeling (alteration of DNA-nucleosome topology). Specifically binds acetylated lysines on histone 3 and 4 (H3K14ac, H3K9ac, H4K5ac, H4K8ac, H4K12ac, H4K16ac). In the complex, it acts as a tissue-specific anchor between histone acetylations and methylations and chromatin remodeling. It thereby probably plays an essential role in heart and skeletal muscle development. Functionally, acts as a regulator of myogenesis in cooperation with HDGFL2. Mediates the interaction of HDGFL2 with the BAF complex. HDGFL2-DPF3a activate myogenic genes by increasing chromatin accessibility through recruitment of SMARCA4/BRG1/BAF190A (ATPase subunit of the BAF complex) to myogenic gene promoters. The chain is Zinc finger protein DPF3 (DPF3) from Homo sapiens (Human).